Consider the following 112-residue polypeptide: Nucleoid-associated protein CA_C0126 (112 aa).

The segment covering 93 to 102 (EEETSGEMKK) has biased composition (basic and acidic residues). The disordered stretch occupies residues 93 to 112 (EEETSGEMKKLTGGLNIPGL).

This sequence belongs to the YbaB/EbfC family. As to quaternary structure, homodimer.

It is found in the cytoplasm. It localises to the nucleoid. In terms of biological role, binds to DNA and alters its conformation. May be involved in regulation of gene expression, nucleoid organization and DNA protection. The sequence is that of Nucleoid-associated protein CA_C0126 from Clostridium acetobutylicum (strain ATCC 824 / DSM 792 / JCM 1419 / IAM 19013 / LMG 5710 / NBRC 13948 / NRRL B-527 / VKM B-1787 / 2291 / W).